The sequence spans 515 residues: 1-pyrroline-5-carboxylate dehydrogenase (515 aa).

Residues E286 and C320 contribute to the active site.

It belongs to the aldehyde dehydrogenase family. RocA subfamily.

It carries out the reaction L-glutamate 5-semialdehyde + NAD(+) + H2O = L-glutamate + NADH + 2 H(+). It participates in amino-acid degradation; L-proline degradation into L-glutamate; L-glutamate from L-proline: step 2/2. This is 1-pyrroline-5-carboxylate dehydrogenase from Bacillus cytotoxicus (strain DSM 22905 / CIP 110041 / 391-98 / NVH 391-98).